The sequence spans 236 residues: Small ribosomal subunit protein uS3 (236 aa).

Residues 38–106 (LRRYLHTRLK…DIQINISEIK (69 aa)) enclose the KH type-2 domain. The tract at residues 211–236 (DLSPNVQAQQRKMKESPQQRRQRRGG) is disordered.

This sequence belongs to the universal ribosomal protein uS3 family. As to quaternary structure, part of the 30S ribosomal subunit. Forms a tight complex with proteins S10 and S14.

Binds the lower part of the 30S subunit head. Binds mRNA in the 70S ribosome, positioning it for translation. This Salinibacter ruber (strain DSM 13855 / M31) protein is Small ribosomal subunit protein uS3.